Here is a 222-residue protein sequence, read N- to C-terminus: Charged multivesicular body protein 3 (222 aa).

Glycine 2 is lipidated: N-myristoyl glycine. The tract at residues 2-113 (GLFGKTQEKP…LQKSTEVMKA (112 aa)) is intramolecular interaction with C-terminus. A coiled-coil region spans residues 22–54 (KIRKEMRVVDRQIRDIQREEEKVKRSVKDAAKK). 2 important for autoinhibitory function regions span residues 59–64 (VCVVLA) and 168–169 (IL). Positions 141–222 (EEMLEDTFES…MQSRLATLRS (82 aa)) form a coiled coil. The interval 151–220 (MDDQEEMEEE…EAMQSRLATL (70 aa)) is intramolecular interaction with N-terminus. The interaction with VPS4A stretch occupies residues 151-222 (MDDQEEMEEE…MQSRLATLRS (72 aa)). Lysine 179 participates in a covalent cross-link: Glycyl lysine isopeptide (Lys-Gly) (interchain with G-Cter in ubiquitin). Residues 180–222 (APSKVTDALPEPEPSGAMAASEDEEEEEEALEAMQSRLATLRS) form a disordered region. Interaction with STAMBP regions lie at residues 196 to 222 (AMAA…TLRS), 203 to 207 (EEEEE), and 221 to 222 (RS). A Phosphoserine modification is found at serine 200. Acidic residues predominate over residues 200–210 (SEDEEEEEEAL). An MIT-interacting motif motif is present at residues 201–211 (EDEEEEEEALE).

Belongs to the SNF7 family. In terms of assembly, probable core component of the endosomal sorting required for transport complex III (ESCRT-III). ESCRT-III components are thought to multimerize to form a flat lattice on the perimeter membrane of the endosome. Several assembly forms of ESCRT-III may exist that interact and act sequentially. Forms a metastable monomer in solution; its core structure (without part of the putative autoinhibitory C-terminal acidic region) oligomerizes into a flat lattice via two different dimerization interfaces. In vitro, heteromerizes with CHMP2A (but not CHMP4) to form helical tubular structures that expose membrane-interacting sites on the outside whereas VPS4B can associate on the inside of the tubule. May interact with IGFBP7; the relevance of such interaction however remains unclear. Interacts with CHMP2A. Interacts with CHMP4A; the interaction requires the release of CHMP4A autoinhibition. Interacts with VPS4A. Interacts with STAMBP; the interaction appears to relieve the autoinhibition of CHMP3. Interacts with VTA1.

It is found in the cytoplasm. The protein resides in the cytosol. It localises to the membrane. The protein localises to the endosome. Its subcellular location is the late endosome membrane. Functionally, probable core component of the endosomal sorting required for transport complex III (ESCRT-III) which is involved in multivesicular bodies (MVBs) formation and sorting of endosomal cargo proteins into MVBs. MVBs contain intraluminal vesicles (ILVs) that are generated by invagination and scission from the limiting membrane of the endosome and mostly are delivered to lysosomes enabling degradation of membrane proteins, such as stimulated growth factor receptors, lysosomal enzymes and lipids. The MVB pathway appears to require the sequential function of ESCRT-O, -I,-II and -III complexes. ESCRT-III proteins mostly dissociate from the invaginating membrane before the ILV is released. The ESCRT machinery also functions in topologically equivalent membrane fission events, such as the terminal stages of cytokinesis and the budding of enveloped viruses (lentiviruses). ESCRT-III proteins are believed to mediate the necessary vesicle extrusion and/or membrane fission activities, possibly in conjunction with the AAA ATPase VPS4. Selectively binds to phosphatidylinositol 3,5-bisphosphate PtdIns(3,5)P2 and PtdIns(3,4)P2 in preference to other phosphoinositides tested. Involved in late stages of cytokinesis. Plays a role in endosomal sorting/trafficking of EGF receptor. This chain is Charged multivesicular body protein 3 (CHMP3), found in Pongo abelii (Sumatran orangutan).